The following is a 213-amino-acid chain: Cytokinin riboside 5'-monophosphate phosphoribohydrolase LOG2 (213 aa).

Substrate is bound by residues E79, 97–98 (RK), 114–120 (GYGTFEE), and T126.

This sequence belongs to the LOG family. Expressed in roots and shoots. Detected in root hairs.

It localises to the cytoplasm. The protein resides in the nucleus. It catalyses the reaction N(6)-(dimethylallyl)adenosine 5'-phosphate + H2O = N(6)-dimethylallyladenine + D-ribose 5-phosphate. The enzyme catalyses 9-ribosyl-trans-zeatin 5'-phosphate + H2O = trans-zeatin + D-ribose 5-phosphate. Cytokinin-activating enzyme working in the direct activation pathway. Phosphoribohydrolase that converts inactive cytokinin nucleotides to the biologically active free-base forms. In Arabidopsis thaliana (Mouse-ear cress), this protein is Cytokinin riboside 5'-monophosphate phosphoribohydrolase LOG2 (LOG2).